The sequence spans 201 residues: 3-isopropylmalate dehydratase small subunit (201 aa).

It belongs to the LeuD family. LeuD type 1 subfamily. As to quaternary structure, heterodimer of LeuC and LeuD.

The catalysed reaction is (2R,3S)-3-isopropylmalate = (2S)-2-isopropylmalate. It participates in amino-acid biosynthesis; L-leucine biosynthesis; L-leucine from 3-methyl-2-oxobutanoate: step 2/4. In terms of biological role, catalyzes the isomerization between 2-isopropylmalate and 3-isopropylmalate, via the formation of 2-isopropylmaleate. The chain is 3-isopropylmalate dehydratase small subunit from Azorhizobium caulinodans (strain ATCC 43989 / DSM 5975 / JCM 20966 / LMG 6465 / NBRC 14845 / NCIMB 13405 / ORS 571).